The following is an 882-amino-acid chain: Nucleoporin NUP82 (882 aa).

Positions 76–98 (WESRPSRSSVGPTSTKKDSSDFD) are disordered. 2 coiled-coil regions span residues 676–762 (TEVS…GRTT) and 806–829 (KRLE…QKVG).

Component of the nuclear pore complex (NPC). NPC constitutes the exclusive means of nucleocytoplasmic transport. NPCs allow the passive diffusion of ions and small molecules and the active, nuclear transport receptor-mediated bidirectional transport of macromolecules such as proteins, RNAs, ribonucleoparticles (RNPs), and ribosomal subunits across the nuclear envelope. Due to its 8-fold rotational symmetry, all subunits are present with 8 copies or multiples thereof.

The protein resides in the nucleus. Its subcellular location is the nuclear pore complex. It localises to the nucleus membrane. Functionally, functions as a component of the nuclear pore complex (NPC). NPC components, collectively referred to as nucleoporins (NUPs), can play the role of both NPC structural components and of docking or interaction partners for transiently associated nuclear transport factors. This is Nucleoporin NUP82 (NUP82) from Chaetomium thermophilum (strain DSM 1495 / CBS 144.50 / IMI 039719) (Thermochaetoides thermophila).